The sequence spans 332 residues: uncharacterized protein (332 aa).

The helical transmembrane segment at 27-47 threads the bilayer; that stretch reads CAIVFLCVLLILPFLSCCTSL.

The protein resides in the membrane. This is an uncharacterized protein from Treponema pallidum (strain Nichols).